A 108-amino-acid chain; its full sequence is Putative pterin-4-alpha-carbinolamine dehydratase (108 aa).

It belongs to the pterin-4-alpha-carbinolamine dehydratase family.

The catalysed reaction is (4aS,6R)-4a-hydroxy-L-erythro-5,6,7,8-tetrahydrobiopterin = (6R)-L-erythro-6,7-dihydrobiopterin + H2O. In Chromobacterium violaceum (strain ATCC 12472 / DSM 30191 / JCM 1249 / CCUG 213 / NBRC 12614 / NCIMB 9131 / NCTC 9757 / MK), this protein is Putative pterin-4-alpha-carbinolamine dehydratase.